The primary structure comprises 415 residues: Gamma-glutamyl phosphate reductase 1 (415 aa).

Belongs to the gamma-glutamyl phosphate reductase family.

The protein localises to the cytoplasm. It carries out the reaction L-glutamate 5-semialdehyde + phosphate + NADP(+) = L-glutamyl 5-phosphate + NADPH + H(+). It participates in amino-acid biosynthesis; L-proline biosynthesis; L-glutamate 5-semialdehyde from L-glutamate: step 2/2. In terms of biological role, catalyzes the NADPH-dependent reduction of L-glutamate 5-phosphate into L-glutamate 5-semialdehyde and phosphate. The product spontaneously undergoes cyclization to form 1-pyrroline-5-carboxylate. This is Gamma-glutamyl phosphate reductase 1 from Bacillus licheniformis (strain ATCC 14580 / DSM 13 / JCM 2505 / CCUG 7422 / NBRC 12200 / NCIMB 9375 / NCTC 10341 / NRRL NRS-1264 / Gibson 46).